Here is a 205-residue protein sequence, read N- to C-terminus: Large ribosomal subunit protein uL3 (205 aa).

This sequence belongs to the universal ribosomal protein uL3 family. As to quaternary structure, part of the 50S ribosomal subunit. Forms a cluster with proteins L14 and L19.

Its function is as follows. One of the primary rRNA binding proteins, it binds directly near the 3'-end of the 23S rRNA, where it nucleates assembly of the 50S subunit. In Thermosipho africanus (strain TCF52B), this protein is Large ribosomal subunit protein uL3.